Consider the following 675-residue polypeptide: Acetyl-coenzyme A synthetase 2 (675 aa).

CoA contacts are provided by residues 206 to 209 (RGGK) and T325. ATP is bound by residues 401 to 403 (GEP), 425 to 430 (DTMWQT), D516, and R531. Residue S539 participates in CoA binding. R542 contributes to the ATP binding site. A CoA-binding site is contributed by R604.

The protein belongs to the ATP-dependent AMP-binding enzyme family.

The enzyme catalyses acetate + ATP + CoA = acetyl-CoA + AMP + diphosphate. The chain is Acetyl-coenzyme A synthetase 2 (ACS2) from Zygosaccharomyces bailii.